A 510-amino-acid chain; its full sequence is ATP synthase subunit alpha (510 aa).

169–176 (GDRQTGKT) serves as a coordination point for ATP.

This sequence belongs to the ATPase alpha/beta chains family. F-type ATPases have 2 components, CF(1) - the catalytic core - and CF(0) - the membrane proton channel. CF(1) has five subunits: alpha(3), beta(3), gamma(1), delta(1), epsilon(1). CF(0) has four main subunits: a(1), b(1), b'(1) and c(9-12).

It localises to the cell inner membrane. The enzyme catalyses ATP + H2O + 4 H(+)(in) = ADP + phosphate + 5 H(+)(out). In terms of biological role, produces ATP from ADP in the presence of a proton gradient across the membrane. The alpha chain is a regulatory subunit. The sequence is that of ATP synthase subunit alpha from Rhodopseudomonas palustris (strain BisB5).